The following is a 148-amino-acid chain: NADH-quinone oxidoreductase subunit K 2 (148 aa).

The next 3 helical transmembrane spans lie at leucine 3–alanine 23, isoleucine 28–phenylalanine 48, and leucine 64–valine 84. The interval leucine 96–arginine 148 is disordered.

This sequence belongs to the complex I subunit 4L family. NDH-1 is composed of 14 different subunits. Subunits NuoA, H, J, K, L, M, N constitute the membrane sector of the complex.

Its subcellular location is the cell membrane. It carries out the reaction a quinone + NADH + 5 H(+)(in) = a quinol + NAD(+) + 4 H(+)(out). NDH-1 shuttles electrons from NADH, via FMN and iron-sulfur (Fe-S) centers, to quinones in the respiratory chain. The immediate electron acceptor for the enzyme in this species is believed to be a menaquinone. Couples the redox reaction to proton translocation (for every two electrons transferred, four hydrogen ions are translocated across the cytoplasmic membrane), and thus conserves the redox energy in a proton gradient. The polypeptide is NADH-quinone oxidoreductase subunit K 2 (Streptomyces griseus subsp. griseus (strain JCM 4626 / CBS 651.72 / NBRC 13350 / KCC S-0626 / ISP 5235)).